A 290-amino-acid polypeptide reads, in one-letter code: Transmembrane protein 33 homolog (290 aa).

2 disordered regions span residues 1–22 (MSSP…EFTG) and 39–72 (IDPN…SPRA). The span at 45–72 (SSNNTTTQRPSTSSSSRTSSSSTSSPRA) shows a compositional bias: low complexity. 4 helical membrane passes run 83-103 (LYGA…FYFI), 109-129 (FFYK…FNTF), 150-170 (FVFY…YLLP), and 218-238 (IVLI…LVFI).

It belongs to the PER33/POM33 family.

Its subcellular location is the membrane. This is Transmembrane protein 33 homolog (tmem33) from Dictyostelium discoideum (Social amoeba).